The sequence spans 93 residues: Alpha-elapitoxin-Oh2a (93 aa).

A signal peptide spans 1-21; it reads MKTLLLTLVVVTIVCLDLGYT. Disulfide bonds link cysteine 24/cysteine 43, cysteine 36/cysteine 64, cysteine 49/cysteine 53, cysteine 68/cysteine 79, and cysteine 80/cysteine 85.

It belongs to the three-finger toxin family. Long-chain subfamily. Type II alpha-neurotoxin sub-subfamily. In terms of tissue distribution, expressed by the venom gland.

It is found in the secreted. Its function is as follows. Binds with high affinity to muscular (alpha-1/CHRNA1) and neuronal (alpha-7/CHRNA7) nicotinic acetylcholine receptor (nAChR) and inhibits acetylcholine from binding to the receptor, thereby impairing neuromuscular and neuronal transmission. This is Alpha-elapitoxin-Oh2a from Ophiophagus hannah (King cobra).